Reading from the N-terminus, the 2325-residue chain is Protein Ycf2 (2325 aa).

Disordered stretches follow at residues 168-189 (SSQL…GTED), 221-251 (TEIE…EMNN), and 947-1006 (KRKK…KRKE). Residues 230 to 240 (KGLSGSSSKSR) show a composition bias toward low complexity. Composition is skewed to basic and acidic residues over residues 241–250 (LFTEGEKEMN) and 955–1004 (KRKE…PEKR). 1436–1443 (GSIGSGRS) lines the ATP pocket. 3 disordered regions span residues 1510–1529 (YEDR…DYEP), 1855–1996 (LVGS…LLRP), and 2063–2179 (PAEE…DGFS). The span at 1861–1976 (TEEEVEGTEE…VEGTEDEEGE (116 aa)) shows a compositional bias: acidic residues. The segment covering 1977–1989 (GTEKDSSQFDNDR) has biased composition (basic and acidic residues). Acidic residues-rich tracts occupy residues 2063 to 2080 (PAEE…EALE) and 2087 to 2162 (GEEE…ENDS).

Belongs to the Ycf2 family.

It localises to the plastid. The protein resides in the chloroplast stroma. In terms of biological role, probable ATPase of unknown function. Its presence in a non-photosynthetic plant (Epifagus virginiana) and experiments in tobacco indicate that it has an essential function which is probably not related to photosynthesis. The sequence is that of Protein Ycf2 from Oenothera biennis (German evening primrose).